Consider the following 309-residue polypeptide: MMSFLHIVFSILVVVAFILGNFANGFIALINFIAWVKRQKISSADQIIAALAVSRVGLLWVILLHWYSTVLNPTSSNLKVIIFISNAWAVTNHFSIWLATSLSIFYLLKIVNFSRLIFHHLKRKAKSVVLVIVLGSLFFLVCHLVMKNTYINVWTEECEGNVTWKIKLRNAMHLSNLTVAMLANLIPFTLTLISFLLLIYSLCKHLKKMQLHGKGSQDPSTKIHIKALQTVTSFLILLAIYFLCLITSFWNSKMRPKEIVLMLCQAFGIIYPSFHSFILIWGNKTLKQTFLSVLWQVTCWAKGQNQSTP.

At 1 to 6 (MMSFLH) the chain is on the extracellular side. Residues 7–27 (IVFSILVVVAFILGNFANGFI) form a helical membrane-spanning segment. The Cytoplasmic portion of the chain corresponds to 28–46 (ALINFIAWVKRQKISSADQ). The chain crosses the membrane as a helical span at residues 47-67 (IIAALAVSRVGLLWVILLHWY). At 68 to 79 (STVLNPTSSNLK) the chain is on the extracellular side. A helical membrane pass occupies residues 80–100 (VIIFISNAWAVTNHFSIWLAT). At 101-125 (SLSIFYLLKIVNFSRLIFHHLKRKA) the chain is on the cytoplasmic side. Residues 126–146 (KSVVLVIVLGSLFFLVCHLVM) traverse the membrane as a helical segment. Over 147 to 178 (KNTYINVWTEECEGNVTWKIKLRNAMHLSNLT) the chain is Extracellular. A helical transmembrane segment spans residues 179 to 199 (VAMLANLIPFTLTLISFLLLI). At 200-229 (YSLCKHLKKMQLHGKGSQDPSTKIHIKALQ) the chain is on the cytoplasmic side. A helical membrane pass occupies residues 230–250 (TVTSFLILLAIYFLCLITSFW). Topologically, residues 251–259 (NSKMRPKEI) are extracellular. A helical transmembrane segment spans residues 260-280 (VLMLCQAFGIIYPSFHSFILI). Over 281-309 (WGNKTLKQTFLSVLWQVTCWAKGQNQSTP) the chain is Cytoplasmic.

This sequence belongs to the G-protein coupled receptor T2R family.

The protein resides in the membrane. Receptor that may play a role in the perception of bitterness and is gustducin-linked. May play a role in sensing the chemical composition of the gastrointestinal content. The activity of this receptor may stimulate alpha gustducin, mediate PLC-beta-2 activation and lead to the gating of TRPM5. This chain is Taste receptor type 2 member 20 (TAS2R20), found in Pan paniscus (Pygmy chimpanzee).